The sequence spans 103 residues: Thrombin inhibitor rhodniin (103 aa).

2 consecutive Kazal-like domains span residues E1–P50 and D51–T103. Disulfide bonds link C6-C31, C8-C27, C16-C48, C57-C84, C60-C80, and C69-C101.

The protein resides in the secreted. Functionally, thrombin-specific inhibitor. Appears to form 1:1 complexes with thrombin. Prevents blood clotting to allow the insect to feed on blood. This chain is Thrombin inhibitor rhodniin, found in Rhodnius prolixus (Triatomid bug).